Consider the following 658-residue polypeptide: Non-reducing end beta-L-arabinofuranosidase (658 aa).

Beta-L-arabinofuranose contacts are provided by residues histidine 142, 192–194 (DGH), histidine 270, and glutamate 322. Catalysis depends on glutamate 322, which acts as the Proton donor/acceptor. Positions 338, 340, 417, and 418 each coordinate Zn(2+). Cysteine 417 (nucleophile; S-glycosyl-cysteine intermediate) is an active-site residue.

Belongs to the glycosyl hydrolase 127 family. Homodimer in solution. Requires Zn(2+) as cofactor.

It carries out the reaction beta-L-arabinofuranosyl-(1-&gt;2)-beta-L-arabinofuranose + H2O = 2 beta-L-arabinofuranose. Its activity is regulated as follows. Strongly inhibited in the presence of thiol modifiers, suggesting a crucial role for cysteine residues in catalysis. Slightly inhibited by EDTA. Functionally, beta-L-arabinofuranosidase that removes the beta-L-arabinofuranose residue from the non-reducing end of various substrates, including beta-L-arabinofuranosyl-hydroxyproline (Ara-Hyp), Ara-beta-1,2-Ara-beta-Hyp (Ara(2)-Hyp), Ara-beta-1,2-Ara-beta-1,2-Ara-beta-Hyp (Ara(3)-Hyp), and beta-L-arabinofuranosyl-(1-&gt;2)-1-O-methyl-beta-L-arabinofuranose. In the presence of 1-alkanols, shows transglycosylation activity, retaining the anomeric configuration of the arabinofuranose residue. The protein is Non-reducing end beta-L-arabinofuranosidase of Bifidobacterium longum subsp. longum (strain ATCC 15707 / DSM 20219 / JCM 1217 / NCTC 11818 / E194b).